Consider the following 41-residue polypeptide: Large ribosomal subunit protein bL36B (41 aa).

It belongs to the bacterial ribosomal protein bL36 family.

The protein is Large ribosomal subunit protein bL36B of Neisseria meningitidis serogroup C (strain 053442).